The primary structure comprises 754 residues: 84 kDa readthrough protein (754 aa).

Disordered regions lie at residues 103–131 (RGEG…QGQT) and 713–740 (KNTR…KSGV). The segment covering 713-730 (KNTRMYPSTSGQSYNSYK) has biased composition (polar residues).

The protein belongs to the virgaviridae capsid protein family.

Its subcellular location is the virion. Functionally, minor capsid protein involved in virus transmission by the vector. This chain is 84 kDa readthrough protein (CP-CP2), found in Soil-borne wheat mosaic virus (strain United States/Nebraska/1981) (SBWMV).